The following is a 257-amino-acid chain: uncharacterized protein (257 aa).

The signal sequence occupies residues M1–A22. C23 carries N-palmitoyl cysteine lipidation. C23 is lipidated: S-diacylglycerol cysteine.

Belongs to the staphylococcal tandem lipoprotein family.

Its subcellular location is the cell membrane. This is an uncharacterized protein from Staphylococcus aureus (strain MRSA252).